Here is a 263-residue protein sequence, read N- to C-terminus: Probable ribosomal RNA small subunit methyltransferase A (263 aa).

S-adenosyl-L-methionine contacts are provided by Leu12, Gly37, Glu58, Asp83, and Asn100.

Belongs to the class I-like SAM-binding methyltransferase superfamily. rRNA adenine N(6)-methyltransferase family. RsmA subfamily.

Its subcellular location is the cytoplasm. Its function is as follows. Specifically dimethylates two adjacent adenosines in the loop of a conserved hairpin near the 3'-end of 16S rRNA in the 30S particle. May play a critical role in biogenesis of 30S subunits. In Methanococcus maripaludis (strain C7 / ATCC BAA-1331), this protein is Probable ribosomal RNA small subunit methyltransferase A.